The chain runs to 612 residues: 2-isopropylmalate synthase B (612 aa).

The Pyruvate carboxyltransferase domain occupies 71-344 (VRIFDTTLRD…YTGINTQHIL (274 aa)). A divalent metal cation is bound by residues D80, H277, and N313.

Belongs to the alpha-IPM synthase/homocitrate synthase family. LeuA type 1 subfamily. In terms of assembly, homodimer. It depends on a divalent metal cation as a cofactor.

The enzyme catalyses 3-methyl-2-oxobutanoate + acetyl-CoA + H2O = (2S)-2-isopropylmalate + CoA + H(+). The protein operates within amino-acid biosynthesis; L-leucine biosynthesis; L-leucine from 3-methyl-2-oxobutanoate: step 1/4. Catalyzes the condensation of the acetyl group of acetyl-CoA with 3-methyl-2-oxobutanoate (2-oxoisovalerate) to form 3-carboxy-3-hydroxy-4-methylpentanoate (2-isopropylmalate). The protein is 2-isopropylmalate synthase B (IPMSB) of Solanum pennellii (Tomato).